Consider the following 163-residue polypeptide: Cyanate hydratase (163 aa).

Catalysis depends on residues R103, E106, and S129.

This sequence belongs to the cyanase family.

It carries out the reaction cyanate + hydrogencarbonate + 3 H(+) = NH4(+) + 2 CO2. Functionally, catalyzes the reaction of cyanate with bicarbonate to produce ammonia and carbon dioxide. The protein is Cyanate hydratase of Ajellomyces dermatitidis (strain ER-3 / ATCC MYA-2586) (Blastomyces dermatitidis).